A 436-amino-acid polypeptide reads, in one-letter code: AP-2 complex subunit mu-B (436 aa).

Residues 170 to 435 (RNELFLDVLE…IGRSGIYETR (266 aa)) enclose the MHD domain. The a 1,2-diacyl-sn-glycero-3-phospho-(1D-myo-inositol-3,4,5-trisphosphate) site is built by Lys-342, Lys-346, and Lys-355.

Belongs to the adaptor complexes medium subunit family. Adaptor protein complex 2 (AP-2) is a heterotetramer composed of two large adaptins (alpha-type subunit and beta-type subunit), a medium adaptin (mu-type subunit) and a small adaptin (sigma-type subunit).

It is found in the cell membrane. It localises to the membrane. Its subcellular location is the coated pit. Functionally, component of the adaptor complexes which link clathrin to receptors in coated vesicles. Clathrin-associated protein complexes are believed to interact with the cytoplasmic tails of membrane proteins, leading to their selection and concentration. AP50 is a subunit of the plasma membrane adaptor. The complex binds polyphosphoinositide-containing lipids. The chain is AP-2 complex subunit mu-B (ap2m1b) from Danio rerio (Zebrafish).